A 285-amino-acid polypeptide reads, in one-letter code: Acetyl-coenzyme A carboxylase carboxyl transferase subunit beta (285 aa).

The CoA carboxyltransferase N-terminal domain maps to 24–285 (GLWYKSPTGK…DLIQNQPVRA (262 aa)).

It belongs to the AccD/PCCB family. In terms of assembly, acetyl-CoA carboxylase is a heterohexamer composed of biotin carboxyl carrier protein (AccB), biotin carboxylase (AccC) and two subunits each of ACCase subunit alpha (AccA) and ACCase subunit beta (AccD).

It is found in the cytoplasm. The enzyme catalyses N(6)-carboxybiotinyl-L-lysyl-[protein] + acetyl-CoA = N(6)-biotinyl-L-lysyl-[protein] + malonyl-CoA. Its pathway is lipid metabolism; malonyl-CoA biosynthesis; malonyl-CoA from acetyl-CoA: step 1/1. Functionally, component of the acetyl coenzyme A carboxylase (ACC) complex. Biotin carboxylase (BC) catalyzes the carboxylation of biotin on its carrier protein (BCCP) and then the CO(2) group is transferred by the transcarboxylase to acetyl-CoA to form malonyl-CoA. This chain is Acetyl-coenzyme A carboxylase carboxyl transferase subunit beta, found in Christiangramia forsetii (strain DSM 17595 / CGMCC 1.15422 / KT0803) (Gramella forsetii).